A 109-amino-acid chain; its full sequence is NAD(P)H-quinone oxidoreductase subunit M (109 aa).

This sequence belongs to the complex I NdhM subunit family. As to quaternary structure, NDH-1 can be composed of about 15 different subunits; different subcomplexes with different compositions have been identified which probably have different functions.

The protein localises to the cellular thylakoid membrane. It catalyses the reaction a plastoquinone + NADH + (n+1) H(+)(in) = a plastoquinol + NAD(+) + n H(+)(out). The catalysed reaction is a plastoquinone + NADPH + (n+1) H(+)(in) = a plastoquinol + NADP(+) + n H(+)(out). In terms of biological role, NDH-1 shuttles electrons from an unknown electron donor, via FMN and iron-sulfur (Fe-S) centers, to quinones in the respiratory and/or the photosynthetic chain. The immediate electron acceptor for the enzyme in this species is believed to be plastoquinone. Couples the redox reaction to proton translocation, and thus conserves the redox energy in a proton gradient. Cyanobacterial NDH-1 also plays a role in inorganic carbon-concentration. The protein is NAD(P)H-quinone oxidoreductase subunit M of Microcystis aeruginosa (strain NIES-843 / IAM M-2473).